The sequence spans 351 residues: Glycerol-3-phosphate dehydrogenase [NAD(P)+] (351 aa).

Residues Ser-18, Trp-19, Arg-38, and Lys-122 each coordinate NADPH. Sn-glycerol 3-phosphate-binding residues include Lys-122, Gly-153, and Ser-155. Ala-157 contributes to the NADPH binding site. Sn-glycerol 3-phosphate-binding residues include Lys-208, Asp-261, Ser-271, Arg-272, and Asn-273. The active-site Proton acceptor is Lys-208. NADPH is bound at residue Arg-272. Glu-297 is an NADPH binding site.

It belongs to the NAD-dependent glycerol-3-phosphate dehydrogenase family.

It localises to the cytoplasm. The enzyme catalyses sn-glycerol 3-phosphate + NAD(+) = dihydroxyacetone phosphate + NADH + H(+). It catalyses the reaction sn-glycerol 3-phosphate + NADP(+) = dihydroxyacetone phosphate + NADPH + H(+). Its pathway is membrane lipid metabolism; glycerophospholipid metabolism. Functionally, catalyzes the reduction of the glycolytic intermediate dihydroxyacetone phosphate (DHAP) to sn-glycerol 3-phosphate (G3P), the key precursor for phospholipid synthesis. The chain is Glycerol-3-phosphate dehydrogenase [NAD(P)+] from Bordetella bronchiseptica (strain ATCC BAA-588 / NCTC 13252 / RB50) (Alcaligenes bronchisepticus).